The sequence spans 94 residues: Large ribosomal subunit protein bL25 (94 aa).

It belongs to the bacterial ribosomal protein bL25 family. Part of the 50S ribosomal subunit; part of the 5S rRNA/L5/L18/L25 subcomplex. Contacts the 5S rRNA. Binds to the 5S rRNA independently of L5 and L18.

This is one of the proteins that binds to the 5S RNA in the ribosome where it forms part of the central protuberance. The chain is Large ribosomal subunit protein bL25 from Erwinia tasmaniensis (strain DSM 17950 / CFBP 7177 / CIP 109463 / NCPPB 4357 / Et1/99).